The primary structure comprises 542 residues: ATP synthase subunit beta (542 aa).

Low complexity predominate over residues 1-50 (MAKTPAKAPAAAAKPAAVKKPAAPKAAAAPKAAAVATPAAKKPAAPKAAP). The disordered stretch occupies residues 1-61 (MAKTPAKAPA…SKVAGTREKP (61 aa)). Position 216-223 (216-223 (GGAGVGKT)) interacts with ATP.

This sequence belongs to the ATPase alpha/beta chains family. In terms of assembly, F-type ATPases have 2 components, CF(1) - the catalytic core - and CF(0) - the membrane proton channel. CF(1) has five subunits: alpha(3), beta(3), gamma(1), delta(1), epsilon(1). CF(0) has three main subunits: a(1), b(2) and c(9-12). The alpha and beta chains form an alternating ring which encloses part of the gamma chain. CF(1) is attached to CF(0) by a central stalk formed by the gamma and epsilon chains, while a peripheral stalk is formed by the delta and b chains.

Its subcellular location is the cell inner membrane. It carries out the reaction ATP + H2O + 4 H(+)(in) = ADP + phosphate + 5 H(+)(out). Produces ATP from ADP in the presence of a proton gradient across the membrane. The catalytic sites are hosted primarily by the beta subunits. The sequence is that of ATP synthase subunit beta from Caulobacter sp. (strain K31).